The sequence spans 244 residues: tRNA pseudouridine synthase A (244 aa).

The active-site Nucleophile is D52. Y111 lines the substrate pocket.

Belongs to the tRNA pseudouridine synthase TruA family. As to quaternary structure, homodimer.

The enzyme catalyses uridine(38/39/40) in tRNA = pseudouridine(38/39/40) in tRNA. Functionally, formation of pseudouridine at positions 38, 39 and 40 in the anticodon stem and loop of transfer RNAs. The chain is tRNA pseudouridine synthase A from Thermosipho africanus (strain TCF52B).